Reading from the N-terminus, the 489-residue chain is Lysine--tRNA ligase (489 aa).

Positions 399 and 406 each coordinate Mg(2+).

This sequence belongs to the class-II aminoacyl-tRNA synthetase family. Homodimer. Mg(2+) is required as a cofactor.

It is found in the cytoplasm. It carries out the reaction tRNA(Lys) + L-lysine + ATP = L-lysyl-tRNA(Lys) + AMP + diphosphate. The chain is Lysine--tRNA ligase from Roseiflexus castenholzii (strain DSM 13941 / HLO8).